Consider the following 551-residue polypeptide: MGKIKKLDKNVVSRIAAGEAVAGPFSVVKELVENALDASATKIEIEILNGGKSYIKVKDNGEGMSRDDLLLSIEEHTTSKIEDFEDIYNLYSFGFRGEALSSISKVSKLVITSNDGKESNRLEVIGGKIKDIKEYPTSEKGTIVEVYDLFFNVPARRKFLKSDNVEKRYVVEYVEKFLLGNPDVEIVLKSDGEVVYNAVKGNLEDRFRLIFPEVREFTEVSGKYVKGIISSPSYYRNNRTGQIFFVQKRFVIDKMLYYIFETGYGEALLKHPYGVLFIEVPPRFVDVNVHPQKLEVKFSNPNVIYSDITRTVREGIKKFVSKKIFVKKEQNTVNENKLNYAYGPKSKPFQTNIEKNMLFNVEKKQLEVKRDIVVLKKRYVLFESNDGIYIMDFHAAHERILYDNIIKQLDEKVERLDLMIPIEIKIGKSFLQIAEGRKEDFKRFGFNIKIDKEKIIVLSIPSFIKPSDVVEVLMEILDEYRILGENPKSMKHIIADKACKKAVKTGYDILESEAKQLVEEVLKRGLTTCPHGRPLFLKITYKELDSFFERT.

The protein belongs to the DNA mismatch repair MutL/HexB family.

Functionally, this protein is involved in the repair of mismatches in DNA. It is required for dam-dependent methyl-directed DNA mismatch repair. May act as a 'molecular matchmaker', a protein that promotes the formation of a stable complex between two or more DNA-binding proteins in an ATP-dependent manner without itself being part of a final effector complex. This chain is DNA mismatch repair protein MutL, found in Thermosipho melanesiensis (strain DSM 12029 / CIP 104789 / BI429).